Here is a 1093-residue protein sequence, read N- to C-terminus: Synaptopodin-2 (1093 aa).

Residues 1 to 180 form an interaction with VPS18 region; the sequence is MGTGDFICIS…PDSQRGRVAE (180 aa). Residues 6 to 88 form the PDZ domain; sequence FICISMTGGA…SLQMLIKRPS (83 aa). Disordered stretches follow at residues 144 to 174 and 211 to 233; these read ENQR…PDSQ and ASGP…DPNL. The segment covering 222 to 233 has biased composition (basic and acidic residues); it reads EKSKSPDPDPNL. Ser-274, Ser-310, Ser-329, and Ser-330 each carry phosphoserine. The interval 329 to 369 is disordered; that stretch reads SSEGTEQGEDPRSEKDHSRPHKHRARHARLRRSESLSEKQV. Thr-333 bears the Phosphothreonine mark. The span at 346–358 shows a compositional bias: basic residues; sequence SRPHKHRARHARL. The segment covering 359 to 369 has biased composition (basic and acidic residues); it reads RRSESLSEKQV. Positions 398 to 406 match the Nuclear localization signal motif; the sequence is KKRRRRARK. 3 interaction with ACTN2 regions span residues 481–663, 664–924, and 901–1093; these read MEML…FYDS, SERI…PPVA, and QSPT…VVEE. Disordered stretches follow at residues 507-803 and 834-870; these read AQKE…GTVV and AVAS…GMSG. F-actin binding regions lie at residues 534-663 and 664-803; these read TSYQ…FYDS and SERI…GTVV. 3 positions are modified to phosphoserine: Ser-548, Ser-549, and Ser-551. Composition is skewed to polar residues over residues 565–579 and 595–611; these read PQQN…TANI and SVNQ…NMTS. Ser-604 carries the phosphoserine modification. The interval 607–811 is interaction with YWHAB; that stretch reads RNMTSPIADF…VVSSIKIAQP (205 aa). Position 610 is a phosphothreonine (Thr-610). Position 611 is a phosphoserine (Ser-611). The interaction with BAG3 stretch occupies residues 615-626; it reads DFPAPPPYSAVT. Composition is skewed to pro residues over residues 617–630 and 644–655; these read PAPP…PPPD and AQPPPWPQPAPW. The PPPY motif motif lies at 619-622; sequence PPPY. Tyr-622 bears the Phosphotyrosine mark. Thr-626 is modified (phosphothreonine). A compositionally biased stretch (basic and acidic residues) spans 663–674; it reads SSERIASRDERI. The segment at 664–916 is F-actin bundling activity; that stretch reads SERIASRDER…LPASWKYSSN (253 aa). Residues Ser-705 and Ser-729 each carry the phosphoserine modification. The interval 751–900 is actin binding; it reads AKQKTPPPVA…DTVQAHAARA (150 aa). Thr-755 and Thr-774 each carry phosphothreonine. Over residues 762 to 784 the composition is skewed to low complexity; that stretch reads KPAVKSSSSQPVTPVSPVWSPGV. Phosphoserine occurs at positions 777 and 781. 2 stretches are compositionally biased toward polar residues: residues 793 to 803 and 835 to 853; these read PTSNPSKGTVV and VASQ…TVNA. Residues 810-1093 form an interaction with FLNC region; the sequence is QPSYPPARPA…QVWKPSVVEE (284 aa). Phosphoserine occurs at positions 902, 906, and 910. The disordered stretch occupies residues 937 to 956; it reads ALKSQPSAAQPSKMGKKKGK. The segment at 1000–1019 is interaction with ZYX; that stretch reads LAMKQALPPRPVNAASPTNV. Residue Ser-1015 is modified to Phosphoserine. The span at 1041–1050 shows a compositional bias: low complexity; it reads SSPVSASPVP. Residues 1041 to 1064 are disordered; the sequence is SSPVSASPVPVGIPTSPKQESASS. The residue at position 1056 (Ser-1056) is a Phosphoserine.

This sequence belongs to the synaptopodin family. In terms of assembly, may self-associate in muscle cells under oxidative stress. Binds F-actin. Interacts with ACTN2; ACTN2 is proposed to anchor SYOP2 at Z lines in mature myocytes. Interacts with AKAP6, PPP3CA and CAMK2A. Interacts (phosphorylated form) with YWHAB; YWHAB competes with ACTN2 for interaction with SYNPO2. Interacts with KPNA2; mediating nuclear import of SYNOP2; dependent on interaction with YWHAB. Interacts with IPO13; may be implicated in SYNOP2 nuclear import. Interacts with ZYX, FLNC, ILK. Interacts with BAG3 (via WW 1 domain). May associate with the CASA complex consisting of HSPA8, HSPB8 and BAG3. Interacts with VPS18. In terms of processing, phosphorylated by PKA, and by CaMK2 at multiple sites. Dephosphorylated by calcineurin; abrogating interaction with YWHAB and impairing nuclear import. Phosphorylated by ILK. As to expression, expressed in heart muscle. Isoform 5 is specifically expressed in skeletal muscle.

Its subcellular location is the nucleus. It localises to the cytoplasm. The protein localises to the cytoskeleton. It is found in the myofibril. The protein resides in the sarcomere. Its subcellular location is the z line. It localises to the cell junction. The protein localises to the focal adhesion. In terms of biological role, has an actin-binding and actin-bundling activity. Can induce the formation of F-actin networks in an isoform-specific manner. At the sarcomeric Z lines is proposed to act as adapter protein that links nascent myofibers to the sarcolemma via ZYX and may play a role in early assembly and stabilization of the Z lines. Involved in autophagosome formation. May play a role in chaperone-assisted selective autophagy (CASA) involved in Z lines maintenance in striated muscle under mechanical tension; may link the client-processing CASA chaperone machinery to a membrane-tethering and fusion complex providing autophagosome membranes. Involved in regulation of cell migration. May be a tumor suppressor. Its function is as follows. Involved in regulation of cell migration. Can induce formation of thick, irregular actin bundles in the cell body. Involved in regulation of cell migration. Can induce long, well-organized actin bundles frequently orientated in parallel along the long axis of the cell showing characteristics of contractile ventral stress fibers. Functionally, involved in regulation of cell migration. Can induce an amorphous actin meshwork throughout the cell body containing a mixture of long and short, randomly organized thick and thin actin bundles. In terms of biological role, can induce long, well-organized actin bundles frequently orientated in parallel along the long axis of the cell showing characteristics of contractile ventral stress fibers. Its function is as follows. Involved in regulation of cell migration in part dependent on the Rho-ROCK cascade; can promote formation of nascent focal adhesions, actin bundles at the leading cell edge and lamellipodia. Can induce formation of thick, irregular actin bundles in the cell body; the induced actin network is associated with enhanced cell migration in vitro. The protein is Synaptopodin-2 (SYNPO2) of Homo sapiens (Human).